The following is a 652-amino-acid chain: Probable serine/threonine-protein kinase mkcD (652 aa).

Disordered regions lie at residues 1–47 (MNNI…RKNK), 163–198 (NPIDENDKINSKSINDGDDNGGGSGGGGDNSPLTNV), and 257–289 (QQKLKQEQQQEQQQQQEDEPNKSPVSTSSTLSP). The span at 182–191 (NGGGSGGGGD) shows a compositional bias: gly residues. The stretch at 231 to 275 (KNNQNLHHKQQQLQQLQQLKQQHLQQQQKLKQEQQQEQQQQQEDE) forms a coiled coil. The segment covering 257-271 (QQKLKQEQQQEQQQQ) has biased composition (low complexity). Residues 279 to 289 (SPVSTSSTLSP) are compositionally biased toward polar residues. One can recognise a Protein kinase domain in the interval 369–626 (FKNLDFEARG…SSQLLQHPFL (258 aa)). Residues 375-383 (EARGGFGSV) and Lys-403 each bind ATP. Residue Asp-494 is the Proton acceptor of the active site.

This sequence belongs to the protein kinase superfamily. STE Ser/Thr protein kinase family. STE20 subfamily. Mg(2+) serves as cofactor.

It carries out the reaction L-seryl-[protein] + ATP = O-phospho-L-seryl-[protein] + ADP + H(+). It catalyses the reaction L-threonyl-[protein] + ATP = O-phospho-L-threonyl-[protein] + ADP + H(+). This chain is Probable serine/threonine-protein kinase mkcD, found in Dictyostelium discoideum (Social amoeba).